The chain runs to 100 residues: Nucleoid-associated protein HPSH_00175 (100 aa).

It belongs to the YbaB/EbfC family. As to quaternary structure, homodimer.

It is found in the cytoplasm. The protein localises to the nucleoid. Binds to DNA and alters its conformation. May be involved in regulation of gene expression, nucleoid organization and DNA protection. This is Nucleoid-associated protein HPSH_00175 from Helicobacter pylori (strain Shi470).